The following is a 468-amino-acid chain: Chromosomal replication initiator protein DnaA (468 aa).

Residues 1 to 84 (MSSSLWLQCL…RFEVGSRRVA (84 aa)) are domain I, interacts with DnaA modulators. The domain II stretch occupies residues 84-131 (AAPKPAPTRTPADVAAESSAPAQLQARKPVHKTWDDDAQVIADINHRS). Residues 85–95 (APKPAPTRTPA) show a composition bias toward low complexity. The tract at residues 85–104 (APKPAPTRTPADVAAESSAP) is disordered. A domain III, AAA+ region region spans residues 132–348 (NVNPKHKFNN…GALNRVIANA (217 aa)). ATP is bound by residues glycine 176, glycine 178, lysine 179, and threonine 180. The tract at residues 349–468 (NFTGRPITID…YSNLIRTLSS (120 aa)) is domain IV, binds dsDNA.

It belongs to the DnaA family. As to quaternary structure, oligomerizes as a right-handed, spiral filament on DNA at oriC.

The protein localises to the cytoplasm. Its function is as follows. Plays an essential role in the initiation and regulation of chromosomal replication. ATP-DnaA binds to the origin of replication (oriC) to initiate formation of the DNA replication initiation complex once per cell cycle. Binds the DnaA box (a 9 base pair repeat at the origin) and separates the double-stranded (ds)DNA. Forms a right-handed helical filament on oriC DNA; dsDNA binds to the exterior of the filament while single-stranded (ss)DNA is stabiized in the filament's interior. The ATP-DnaA-oriC complex binds and stabilizes one strand of the AT-rich DNA unwinding element (DUE), permitting loading of DNA polymerase. After initiation quickly degrades to an ADP-DnaA complex that is not apt for DNA replication. Binds acidic phospholipids. Functionally, complements a temperature-sensitive E.coli mutant, the DnaA consensus is 5'-TT(A/T)TNCACA-3'. In Vibrio harveyi (Beneckea harveyi), this protein is Chromosomal replication initiator protein DnaA.